A 179-amino-acid chain; its full sequence is ATP synthase subunit delta (179 aa).

This sequence belongs to the ATPase delta chain family. In terms of assembly, F-type ATPases have 2 components, F(1) - the catalytic core - and F(0) - the membrane proton channel. F(1) has five subunits: alpha(3), beta(3), gamma(1), delta(1), epsilon(1). F(0) has three main subunits: a(1), b(2) and c(10-14). The alpha and beta chains form an alternating ring which encloses part of the gamma chain. F(1) is attached to F(0) by a central stalk formed by the gamma and epsilon chains, while a peripheral stalk is formed by the delta and b chains.

The protein resides in the cell membrane. Its function is as follows. F(1)F(0) ATP synthase produces ATP from ADP in the presence of a proton or sodium gradient. F-type ATPases consist of two structural domains, F(1) containing the extramembraneous catalytic core and F(0) containing the membrane proton channel, linked together by a central stalk and a peripheral stalk. During catalysis, ATP synthesis in the catalytic domain of F(1) is coupled via a rotary mechanism of the central stalk subunits to proton translocation. In terms of biological role, this protein is part of the stalk that links CF(0) to CF(1). It either transmits conformational changes from CF(0) to CF(1) or is implicated in proton conduction. This is ATP synthase subunit delta from Clostridium botulinum (strain 657 / Type Ba4).